The following is a 492-amino-acid chain: Lysine--tRNA ligase (492 aa).

Glutamate 403 and glutamate 410 together coordinate Mg(2+).

It belongs to the class-II aminoacyl-tRNA synthetase family. In terms of assembly, homodimer. Mg(2+) serves as cofactor.

Its subcellular location is the cytoplasm. The enzyme catalyses tRNA(Lys) + L-lysine + ATP = L-lysyl-tRNA(Lys) + AMP + diphosphate. In Mycoplasmoides gallisepticum (strain R(low / passage 15 / clone 2)) (Mycoplasma gallisepticum), this protein is Lysine--tRNA ligase.